The chain runs to 953 residues: MSDYKQTLNLPATSFAMKGNMANREPNMLKYWAAKDLYGKIREAKKGKKSFILHDGPPYANGNIHLGHAVNKILKDIIVKSKNLSDFNSPFVPGWDCHGLPIELMVEKKVGKPGHKISASDFRQKCREYAAKQVNGQREDFKRLGIFADWEKPYLTMDFGTEANIIRSLGKIAENGHLHQGFKPVHWCTDCGSSLAEAEVEYKDKQSPAIDVKFTISDESVADKFSHPEGHKGEGEIGAVIWTTTPWTLPANRAIAVNAEVEYTLVQCEQAGEKQRLIIASDLVTTCMDRFGFDKYHALGFCKGSELELVQCQHPFYDFTVPVVLGEHVTTDSGTGCVHTAPGHGVEDFVVGKLYDLEVANPVGANGVYLEDTPLLAGQHVFKANASVVELLKEKGALVHHHALDHSYPHCWRHKTPLIFRATPQWFISMDKKGLRQDSLNEIEKTQWIPDWGQRRIESMVEGRPDWCISRQRTWGVPMALFIHQDSGALHPRSIELIEEVALLVEKSGIQAWFDLEAIELIGDDAKEYIKVPDTLDVWFDSGTTHESVIKARDEFDGIADLYLEGSDQHRGWFMSSMISSVAMNGAAPYKQVLTHGFVVDAKGHKMSKSLGNVITPKEITNNLGADILRLWTASVNYTQEITAGDEIFKRQADAYRRIRNTSRFLLSNLTGFEPANHMVAVEDMVALDRWVIDKAARLQEEIINAYDEYEFHVVVHKLMNFCTNELGGFYLDIIKDRQYTAKSDSNARRSCQTAMYLIAEAMTAWMAPILSFTAQEIWEALPLPVSGERDEFVFTGVWFDGLMKQESKQDESTESSDELGNEYWTELLTVRGEVNRALEQARKDKSVGKALEAQVTLFATADLAAKLAKLGDELRFVLITSKATIETVTSAPENALETEVEGLWLTVAPAEGIKCERCWHVTTDIGESEKHPTLCGRCITNIDGEGETRQFA.

Residues Pro58 to His68 carry the 'HIGH' region motif. Glu565 lines the L-isoleucyl-5'-AMP pocket. Residues Lys606–Ser610 carry the 'KMSKS' region motif. An ATP-binding site is contributed by Lys609. Zn(2+) contacts are provided by Cys916, Cys919, Cys936, and Cys939.

The protein belongs to the class-I aminoacyl-tRNA synthetase family. IleS type 1 subfamily. Monomer. Requires Zn(2+) as cofactor.

The protein localises to the cytoplasm. It carries out the reaction tRNA(Ile) + L-isoleucine + ATP = L-isoleucyl-tRNA(Ile) + AMP + diphosphate. Functionally, catalyzes the attachment of isoleucine to tRNA(Ile). As IleRS can inadvertently accommodate and process structurally similar amino acids such as valine, to avoid such errors it has two additional distinct tRNA(Ile)-dependent editing activities. One activity is designated as 'pretransfer' editing and involves the hydrolysis of activated Val-AMP. The other activity is designated 'posttransfer' editing and involves deacylation of mischarged Val-tRNA(Ile). The sequence is that of Isoleucine--tRNA ligase from Colwellia psychrerythraea (strain 34H / ATCC BAA-681) (Vibrio psychroerythus).